We begin with the raw amino-acid sequence, 213 residues long: Large ribosomal subunit protein uL1 (213 aa).

It belongs to the universal ribosomal protein uL1 family. Part of the 50S ribosomal subunit.

Its function is as follows. Binds directly to 23S rRNA. Probably involved in E site tRNA release. Protein L1 is also a translational repressor protein, it controls the translation of its operon by binding to its mRNA. The polypeptide is Large ribosomal subunit protein uL1 (Methanococcus maripaludis (strain C5 / ATCC BAA-1333)).